Consider the following 246-residue polypeptide: Probable transcriptional regulatory protein Pden_1905 (246 aa).

The disordered stretch occupies residues 1 to 21 (MAGHSKWANIQHRKGKQDKLR).

This sequence belongs to the TACO1 family.

The protein localises to the cytoplasm. The polypeptide is Probable transcriptional regulatory protein Pden_1905 (Paracoccus denitrificans (strain Pd 1222)).